We begin with the raw amino-acid sequence, 894 residues long: ABC-transporter-regulating transcription factor (894 aa).

Residues 71–98 (CDMCRKKKIKCDGKMPKCSHCINYRTDC) constitute a DNA-binding region (zn(2)-C6 fungal-type). The span at 159–174 (NTALNSLKSPTNKFNG) shows a compositional bias: polar residues. The interval 159-219 (NTALNSLKSP…PKESETEVEG (61 aa)) is disordered. Low complexity predominate over residues 175–189 (SSATSQSQHTTASRH). The segment covering 199–210 (SPHTAATSPNSP) has biased composition (polar residues). A helical transmembrane segment spans residues 649 to 669 (CVWLILYYPVSALVTLFANIL). Positions 724-797 (AEKESHSKKK…MSNPTRAFAP (74 aa)) are disordered. The segment covering 736 to 750 (AAPDEPQDLRQKTPD) has biased composition (basic and acidic residues). 2 stretches are compositionally biased toward polar residues: residues 751–761 (ENSVPSPSTKR) and 771–792 (LFPS…SNPT).

The protein resides in the nucleus. The protein localises to the membrane. Transcription factor that regulates expression of the genes related to resistance to azole compounds. The chain is ABC-transporter-regulating transcription factor from Aspergillus oryzae (strain ATCC 42149 / RIB 40) (Yellow koji mold).